A 646-amino-acid chain; its full sequence is Zinc finger protein 493 (646 aa).

The segment at Phe-26 to His-48 adopts a C2H2-type 1; degenerate zinc-finger fold. C2H2-type zinc fingers lie at residues Phe-54–His-76 and Tyr-82–His-104. The C2H2-type 4; degenerate zinc finger occupies Ser-109 to His-131. The C2H2-type 5 zinc finger occupies Tyr-137 to His-159. The C2H2-type 6; degenerate zinc-finger motif lies at Tyr-165–His-187. The C2H2-type 7; degenerate zinc finger occupies Tyr-193–His-215. A C2H2-type 8; degenerate zinc finger spans residues His-221–His-243. 14 C2H2-type zinc fingers span residues Tyr-249–His-271, His-277–His-299, Tyr-305–His-327, Tyr-333–His-355, Tyr-361–His-383, Tyr-389–His-411, Tyr-417–His-439, Tyr-445–His-467, Tyr-473–His-495, Tyr-501–His-523, Tyr-529–His-551, Tyr-557–His-579, Cys-585–His-607, and Tyr-613–His-635.

It is found in the nucleus. In terms of biological role, may be involved in transcriptional regulation. This chain is Zinc finger protein 493 (ZNF493), found in Homo sapiens (Human).